Reading from the N-terminus, the 122-residue chain is MIQSQTHLNVADNSGARELMCIRIIGTSNRRYAHIGDVIVAVIKEAAPNSPLERSEVIRAVIVRTCKELKRDNGMIIRYDDNAAVVIDQEGNPKGTRIFGAIARELRQLNFTKIVSLAPEVL.

Belongs to the universal ribosomal protein uL14 family. As to quaternary structure, part of the 50S ribosomal subunit.

Its subcellular location is the plastid. The protein resides in the chloroplast. Its function is as follows. Binds to 23S rRNA. This Manihot esculenta (Cassava) protein is Large ribosomal subunit protein uL14c.